A 359-amino-acid polypeptide reads, in one-letter code: Cytosolic sulfotransferase 15 (359 aa).

Position 101–106 (101–106) interacts with 3'-phosphoadenylyl sulfate; sequence KSGTTW. His168 (proton acceptor) is an active-site residue. Residues Arg190, Ser198, Tyr256, and 322 to 324 each bind 3'-phosphoadenylyl sulfate; that span reads RKG.

The protein belongs to the sulfotransferase 1 family. As to expression, expressed in leaves.

The protein resides in the cytoplasm. It catalyses the reaction a 12-hydroxyjasmonate + 3'-phosphoadenylyl sulfate = a 12-sulfojasmonate + adenosine 3',5'-bisphosphate + H(+). Its function is as follows. Sulfotransferase that utilizes 3'-phospho-5'-adenylyl sulfate (PAPS) as sulfonate donor to specifically catalyze the sulfate conjugation of hydroxyjasmonates, with a preference for 12-hydroxyjasmonate over 11-hydroxyjasmonate. No activity with 12-hydroxyjasmonic acid methyl ester, cucurbic acid, 7-iso-cucurbic acid, 6-epi-cucurbic acid, 6-epi-7-iso-cucurbic acid and their methyl esters, prostaglandin E2, arachidonyl alcohol and 11-eicosenol. In Arabidopsis thaliana (Mouse-ear cress), this protein is Cytosolic sulfotransferase 15 (SOT15).